The sequence spans 348 residues: tRNA N6-adenosine threonylcarbamoyltransferase (348 aa).

The Fe cation site is built by His115 and His119. Residues 138-142 (LVSGG), Asp171, Gly184, and Asn276 contribute to the substrate site. Asp304 serves as a coordination point for Fe cation.

This sequence belongs to the KAE1 / TsaD family. Requires Fe(2+) as cofactor.

The protein localises to the cytoplasm. It catalyses the reaction L-threonylcarbamoyladenylate + adenosine(37) in tRNA = N(6)-L-threonylcarbamoyladenosine(37) in tRNA + AMP + H(+). In terms of biological role, required for the formation of a threonylcarbamoyl group on adenosine at position 37 (t(6)A37) in tRNAs that read codons beginning with adenine. Is involved in the transfer of the threonylcarbamoyl moiety of threonylcarbamoyl-AMP (TC-AMP) to the N6 group of A37, together with TsaE and TsaB. TsaD likely plays a direct catalytic role in this reaction. This chain is tRNA N6-adenosine threonylcarbamoyltransferase, found in Xylella fastidiosa (strain 9a5c).